The primary structure comprises 160 residues: Nucleotide-binding protein TERTU_3542 (160 aa).

This sequence belongs to the YajQ family.

In terms of biological role, nucleotide-binding protein. In Teredinibacter turnerae (strain ATCC 39867 / T7901), this protein is Nucleotide-binding protein TERTU_3542.